The chain runs to 373 residues: Chaperone protein DnaJ (373 aa).

The region spanning 4-68 (DYYEILGLTK…VKREQYNQFG (65 aa)) is the J domain. Residues 142–224 (GKEIVEPLEK…CKGKTHTKTT (83 aa)) form a CR-type zinc finger. Zn(2+) contacts are provided by cysteine 155, cysteine 158, cysteine 172, cysteine 175, cysteine 198, cysteine 201, cysteine 212, and cysteine 215. CXXCXGXG motif repeat units follow at residues 155 to 162 (CNTCNGSG), 172 to 179 (CTQCSGMG), 198 to 205 (CSKCNGIG), and 212 to 219 (CLICKGKT).

The protein belongs to the DnaJ family. Homodimer. Zn(2+) is required as a cofactor.

The protein resides in the cytoplasm. Functionally, participates actively in the response to hyperosmotic and heat shock by preventing the aggregation of stress-denatured proteins and by disaggregating proteins, also in an autonomous, DnaK-independent fashion. Unfolded proteins bind initially to DnaJ; upon interaction with the DnaJ-bound protein, DnaK hydrolyzes its bound ATP, resulting in the formation of a stable complex. GrpE releases ADP from DnaK; ATP binding to DnaK triggers the release of the substrate protein, thus completing the reaction cycle. Several rounds of ATP-dependent interactions between DnaJ, DnaK and GrpE are required for fully efficient folding. Also involved, together with DnaK and GrpE, in the DNA replication of plasmids through activation of initiation proteins. The chain is Chaperone protein DnaJ from Mycoplasma mobile (strain ATCC 43663 / 163K / NCTC 11711) (Mesomycoplasma mobile).